The chain runs to 414 residues: Serine--tRNA ligase (414 aa).

230–232 contacts L-serine; it reads TSE. 261–263 is an ATP binding site; that stretch reads RQE. Glutamate 284 is an L-serine binding site. Residue 348-351 participates in ATP binding; sequence EISS. Serine 382 is a binding site for L-serine.

This sequence belongs to the class-II aminoacyl-tRNA synthetase family. Type-1 seryl-tRNA synthetase subfamily. In terms of assembly, homodimer. The tRNA molecule binds across the dimer.

The protein resides in the cytoplasm. The catalysed reaction is tRNA(Ser) + L-serine + ATP = L-seryl-tRNA(Ser) + AMP + diphosphate + H(+). It catalyses the reaction tRNA(Sec) + L-serine + ATP = L-seryl-tRNA(Sec) + AMP + diphosphate + H(+). Its pathway is aminoacyl-tRNA biosynthesis; selenocysteinyl-tRNA(Sec) biosynthesis; L-seryl-tRNA(Sec) from L-serine and tRNA(Sec): step 1/1. Its function is as follows. Catalyzes the attachment of serine to tRNA(Ser). Is also able to aminoacylate tRNA(Sec) with serine, to form the misacylated tRNA L-seryl-tRNA(Sec), which will be further converted into selenocysteinyl-tRNA(Sec). The protein is Serine--tRNA ligase of Campylobacter concisus (strain 13826).